Here is a 199-residue protein sequence, read N- to C-terminus: Thymidine kinase (199 aa).

ATP contacts are provided by residues 15 to 22 (GSMFSGKS) and 88 to 91 (DEVQ). E89 acts as the Proton acceptor in catalysis. C145, C148, C183, and H186 together coordinate Zn(2+).

This sequence belongs to the thymidine kinase family. Homotetramer.

It is found in the cytoplasm. The enzyme catalyses thymidine + ATP = dTMP + ADP + H(+). This chain is Thymidine kinase, found in Staphylococcus epidermidis (strain ATCC 12228 / FDA PCI 1200).